The primary structure comprises 1431 residues: MHALHQTLLPSSSIHHSLFLPHFTPSTIYPLPKPPAALDTLDVKVIGNLVVAGAEVLRVFEIREESVPIIENVKLEEDVAEGEKDVQMEEVGDGFFDDGHAERAPLKYQTTRRLHLLTQHELNGTITGLAATRTLESTIDGLDRLIVSFKDAKMALLEWSRGDIATVSLHTYERCSQMNTGDLQSYVPLLRTDPLSRLAVLTLPEDSLAVLPLIQEQSELDPLSEGFSRDAPYSPSFVLSLSDMSITIKNIQDLLFLPGFHSPTIALLFSPMHTWSGRLQTVKDTFCLEIRTFDLSSGTSYPLLTSVSGLPSDSLYLVACPSELGGIVLVTSTGIVHVDQGGRVTAACVNAWWSRITSLKCSMASVSQKLTLEGSRCVFVTPHDMLLVLQNGAVHQVRFSMEGRAVGVIEVLDKGCVVPPPSDLTVAGDGAVFVGSAEGDSWLAKVNVVRQVVERSEKKKDEMEVDWDEDLYGDINDAALDEKAQELFGPAAITLSPYDILTGVGKIMDIEFGIAASDQGLRTYPQLVAVSGGSRNSTINVFRRGIPITKRRRFNELLNAEGVWFLPIDRQTGQKFKDIPEAERATILLSSEGNATRVFALFSKPTPQQIGRLDGKTLSAAPFFQRSCILRVSPLEVVLLDNNGKIIQTVCPRGDGPKIVNASISDPFVIIRRADDSVTFFVGDTVARTVAEAPIVSEGESPVCQAVEVFTDTTGVYRTFEPSKSESSEPISHQIDSENKPNITNGINGTTARSARQTQLTPQQIKRLQEQEPAITTEAPSMETAINSPHGTQWLALVTRGGELQIRSLPDLQIVLQSEGLASSAPSFTDDLGENPGYVLGEKREEGEEEDEIIQMVFCPIGKGTVRQHLLALHHSGRLNAYEAQPRFTVDASSHSRRSLAVRFRKVHTQLLPISGGVGTTNGNARLPYTIVPFNNIEGLTGAFITGEKPHWIISSEAHPLRAFALKQAAMAFGKTTHLGGKGEYFIRIEDGSFICYLPPTLNTDFAIPCDRYQMERAYTNITFDPTSAHYVGAASIEVPFQAYDEEGEIQLGPDGPDLIPPTNQRSTLELFSQGSDPWKVIDGYEFDQNEEVMSMESVNLESPGAPGGYRDFIAVGTGFNFGEDRATRGNTYIFEILQTVGPQGGGGPGSVPGWKLVKRTKDPARHPVNAVNHINGYLLNTNGPKLYVKGLDYDSQLMGLAFLDIQLYATTVKVFKNFMLIGDLCKSFWFVSLQEDPYKFTTISKDLQHVSVVTADFLVHDGQVTFISSDRNGDMRMLDFDPTDPDSLNGERLMLRTEYHAGSAATVSKVIARRKTAEEEFAPQTQIIYATADGALTTVVSVKDARFKRLQLVSDQLVRNAQHVAGLNPRAFRTVRNDLLPRPLSKGILDGQLLNQFALQPIGRQKEMMRQIGTDAVTVASDLQALGGFW.

Residues 721-759 (EPSKSESSEPISHQIDSENKPNITNGINGTTARSARQTQ) are disordered. Residues 740 to 759 (KPNITNGINGTTARSARQTQ) show a composition bias toward polar residues.

It belongs to the CFT1 family.

It localises to the nucleus. In terms of biological role, RNA-binding component of the cleavage and polyadenylation factor (CPF) complex, which plays a key role in polyadenylation-dependent pre-mRNA 3'-end formation and cooperates with cleavage factors including the CFIA complex and NAB4/CFIB. Involved in poly(A) site recognition. May be involved in coupling transcription termination and mRNA 3'-end formation. The chain is Protein CFT1 (CFT1) from Cryptococcus neoformans var. neoformans serotype D (strain B-3501A) (Filobasidiella neoformans).